The primary structure comprises 107 residues: Phosphoribosyl-ATP pyrophosphatase (107 aa).

The protein belongs to the PRA-PH family.

It localises to the cytoplasm. It carries out the reaction 1-(5-phospho-beta-D-ribosyl)-ATP + H2O = 1-(5-phospho-beta-D-ribosyl)-5'-AMP + diphosphate + H(+). It participates in amino-acid biosynthesis; L-histidine biosynthesis; L-histidine from 5-phospho-alpha-D-ribose 1-diphosphate: step 2/9. This is Phosphoribosyl-ATP pyrophosphatase from Bacillus cereus (strain G9842).